The primary structure comprises 442 residues: Septin-8 (442 aa).

Residues 1-16 (MAATDLERVSSAEPEP) show a composition bias toward basic and acidic residues. The segment at 1-23 (MAATDLERVSSAEPEPRSLSLGG) is disordered. Position 2 is an N-acetylalanine (Ala2). Ser10 is modified (phosphoserine). Residues 41-307 (QGFSFNILCV…ELYRRCKLEE (267 aa)) enclose the Septin-type G domain. Positions 51 to 58 (GETGIGKS) are G1 motif. GTP contacts are provided by residues 51–58 (GETGIGKS), Gly106, 187–195 (KADTISKSE), Gly241, and Arg256. The tract at residues 103–106 (DAVG) is G3 motif. A G4 motif region spans residues 186–189 (AKAD). Residues 322-410 (LQETYEAKRK…RKAAVEALQS (89 aa)) are a coiled coil. A compositionally biased stretch (basic and acidic residues) spans 377 to 391 (HQEEKRKVEEKRREL). The interval 377–442 (HQEEKRKVEE…WSSIYSVTIP (66 aa)) is disordered. 2 stretches are compositionally biased toward polar residues: residues 408 to 420 (LQSQ…SQQP) and 432 to 442 (GWSSIYSVTIP).

It belongs to the TRAFAC class TrmE-Era-EngA-EngB-Septin-like GTPase superfamily. Septin GTPase family. Septins polymerize into heterooligomeric protein complexes that form filaments, and can associate with cellular membranes, actin filaments and microtubules. GTPase activity is required for filament formation. Interacts with CDK14, SEPTIN4, SEPTIN5 and SEPTIN7. Interacts with VAMP2; the interaction inhibits interaction of VAMP2 with SYP. Interacts with STX1A.

The protein resides in the cytoplasm. Its subcellular location is the cytoskeleton. It localises to the synapse. The protein localises to the cell projection. It is found in the axon. The protein resides in the cytoplasmic vesicle. Its subcellular location is the secretory vesicle. It localises to the synaptic vesicle membrane. The protein localises to the presynapse. Functionally, filament-forming cytoskeletal GTPase. May play a role in platelet secretion. Seems to participate in the process of SNARE complex formation in synaptic vesicles. The protein is Septin-8 of Otolemur garnettii (Small-eared galago).